Reading from the N-terminus, the 395-residue chain is Elongation factor Tu (395 aa).

The 195-residue stretch at 10-204 (KPHVNVGTIG…AVDNWVPLPE (195 aa)) folds into the tr-type G domain. Positions 19–26 (GHVDHGKT) are G1. 19–26 (GHVDHGKT) serves as a coordination point for GTP. Thr-26 is a Mg(2+) binding site. The G2 stretch occupies residues 60-64 (GITIN). The G3 stretch occupies residues 81-84 (DCPG). GTP-binding positions include 81–85 (DCPGH) and 136–139 (NKCD). Positions 136–139 (NKCD) are G4. The G5 stretch occupies residues 174-176 (SAL).

The protein belongs to the TRAFAC class translation factor GTPase superfamily. Classic translation factor GTPase family. EF-Tu/EF-1A subfamily. Monomer.

It is found in the cytoplasm. The enzyme catalyses GTP + H2O = GDP + phosphate + H(+). Functionally, GTP hydrolase that promotes the GTP-dependent binding of aminoacyl-tRNA to the A-site of ribosomes during protein biosynthesis. The polypeptide is Elongation factor Tu (Porphyromonas gingivalis (strain ATCC 33277 / DSM 20709 / CIP 103683 / JCM 12257 / NCTC 11834 / 2561)).